A 372-amino-acid chain; its full sequence is UDP-N-acetylglucosamine--N-acetylmuramyl-(pentapeptide) pyrophosphoryl-undecaprenol N-acetylglucosamine transferase (372 aa).

Residues 11 to 13, Asn123, Arg160, Ser200, and Gln298 contribute to the UDP-N-acetyl-alpha-D-glucosamine site; that span reads TAG.

It belongs to the glycosyltransferase 28 family. MurG subfamily.

Its subcellular location is the cell membrane. It catalyses the reaction di-trans,octa-cis-undecaprenyl diphospho-N-acetyl-alpha-D-muramoyl-L-alanyl-D-glutamyl-meso-2,6-diaminopimeloyl-D-alanyl-D-alanine + UDP-N-acetyl-alpha-D-glucosamine = di-trans,octa-cis-undecaprenyl diphospho-[N-acetyl-alpha-D-glucosaminyl-(1-&gt;4)]-N-acetyl-alpha-D-muramoyl-L-alanyl-D-glutamyl-meso-2,6-diaminopimeloyl-D-alanyl-D-alanine + UDP + H(+). Its pathway is cell wall biogenesis; peptidoglycan biosynthesis. In terms of biological role, cell wall formation. Catalyzes the transfer of a GlcNAc subunit on undecaprenyl-pyrophosphoryl-MurNAc-pentapeptide (lipid intermediate I) to form undecaprenyl-pyrophosphoryl-MurNAc-(pentapeptide)GlcNAc (lipid intermediate II). This chain is UDP-N-acetylglucosamine--N-acetylmuramyl-(pentapeptide) pyrophosphoryl-undecaprenol N-acetylglucosamine transferase, found in Cutibacterium acnes (strain DSM 16379 / KPA171202) (Propionibacterium acnes).